Consider the following 138-residue polypeptide: Phospholipase A2 EC1 (138 aa).

The N-terminal stretch at Met-1–Gly-16 is a signal peptide. Intrachain disulfides connect Cys-42–Cys-131, Cys-44–Cys-60, Cys-59–Cys-111, Cys-65–Cys-138, Cys-66–Cys-104, Cys-73–Cys-97, and Cys-91–Cys-102. Ca(2+)-binding residues include Tyr-43, Gly-45, and Gly-47. The active site involves His-63. Asp-64 provides a ligand contact to Ca(2+). Asp-105 is a catalytic residue.

It belongs to the phospholipase A2 family. Group II subfamily. The cofactor is Ca(2+).

The protein localises to the secreted. It catalyses the reaction a 1,2-diacyl-sn-glycero-3-phosphocholine + H2O = a 1-acyl-sn-glycero-3-phosphocholine + a fatty acid + H(+). This Echis coloratus (Carpet viper) protein is Phospholipase A2 EC1.